Reading from the N-terminus, the 4146-residue chain is DNA-dependent protein kinase catalytic subunit (4146 aa).

HEAT repeat units lie at residues 308-343 (DDYQSLFEVISKWCGHTNGEMKKLAFAALDSFLKQI), 925-962 (VIYLDMFLPHITELALSTSDRQTKVAACELLHSIVAFM), 1026-1062 (QDTVALLEAILTGIVDPVDSTLRDFCGQCIQEFLRWS), and 1075-1111 (PVNTTSLFKRLYSLALHPNAFKRLGAALAFNNIYRDF). TPR repeat units follow at residues 1745-1778 (PMKSDEFPKGTLKFNNYVDCIKKFLDALELSQSP) and 1974-2007 (VFSELKFYQGFLFTEKKEKNLLIFENLIDLQRNY). Serine 2075 is modified (phosphoserine; by autocatalysis). Threonine 2631 bears the Phosphothreonine; by autocatalysis mark. Serine 2634 carries the post-translational modification Phosphoserine; by autocatalysis. Phosphothreonine; by autocatalysis occurs at positions 2659 and 2668. One can recognise an FAT domain in the interval 2873 to 3556 (FIACVQDMCY…VYPFMVSGES (684 aa)). A PI3K/PI4K catalytic domain is found at 3739-4071 (FDERVSVMAS…IHCAKRKLDG (333 aa)). The interval 3745–3751 (VMASIRK) is G-loop. A catalytic loop region spans residues 3937–3945 (GIGDRHLSN). Positions 3957-3982 (GIDFGHAFGTATQFLPVPELMPFRLT) are activation loop. One can recognise an FATC domain in the interval 4114–4146 (DGLTEETQVQCLIDQATDPNILGRVWKGWEPWI).

It belongs to the PI3/PI4-kinase family. DNA-PK is a heterotrimer of prkdc and the Ku dimer (composed of xrcc6/Ku70 and xrcc5/Ku86). Component of the core long-range non-homologous end joining (NHEJ) complex (also named DNA-PK complex) composed of prkdc, lig4, xrcc4, xrcc6/ku70, xrcc5/ku86 and nhej1/xlf. Additional component of the NHEJ complex includes paxx. Following autophosphorylation, prkdc dissociates from DNA. Post-translationally, autophosphorylated at two clusters, the T2609 cluster and the S2056 cluster. Autophosphorylated on Ser-2075, Thr-2631, Thr-2659 and Thr-2668. Ser-2075 and Thr-2668 are DNA damage-inducible phosphorylation sites (inducible with ionizing radiation, IR) dephosphorylated by PPP5C. Autophosphorylation induces a conformational change that leads to remodeling of the DNA-PK complex, requisite for efficient end processing and DNA repair. Autophosphorylation in trans within DNA-PK complexes loaded on DNA ends leads to the dissociation of PRKDC from DNA and the transition into the short-range NHEJ complex. Autophosphorylation of the T2609 cluster is required for hematopoietic development and protein synthesis in erythrocytes precursors.

The protein localises to the nucleus. Its subcellular location is the nucleolus. It carries out the reaction L-seryl-[protein] + ATP = O-phospho-L-seryl-[protein] + ADP + H(+). The enzyme catalyses L-threonyl-[protein] + ATP = O-phospho-L-threonyl-[protein] + ADP + H(+). Its function is as follows. Serine/threonine-protein kinase that acts as a molecular sensor for DNA damage. Involved in DNA nonhomologous end joining (NHEJ) required for double-strand break (DSB) repair and V(D)J recombination. Must be bound to DNA to express its catalytic properties. Promotes processing of hairpin DNA structures in V(D)J recombination by activation of the hairpin endonuclease artemis (DCLRE1C). Recruited by XRCC5 and XRCC6 to DNA ends and is required to (1) protect and align broken ends of DNA, thereby preventing their degradation, (2) and sequester the DSB for repair by NHEJ. Acts as a scaffold protein to aid the localization of DNA repair proteins to the site of damage. The assembly of the DNA-PK complex at DNA ends is also required for the NHEJ ligation step. Found at the ends of chromosomes, suggesting a further role in the maintenance of telomeric stability and the prevention of chromosomal end fusion. As part of the DNA-PK complex, involved in the early steps of ribosome assembly by promoting the processing of precursor rRNA into mature 18S rRNA in the small-subunit processome. Recognizes the substrate consensus sequence [ST]-Q. Phosphorylates 'Ser-139' of histone variant H2AX, thereby regulating DNA damage response mechanism. In Xenopus laevis (African clawed frog), this protein is DNA-dependent protein kinase catalytic subunit (prkdc).